The following is a 528-amino-acid chain: Glutamyl-tRNA(Gln) amidotransferase subunit A, mitochondrial (528 aa).

Lys-76 serves as the catalytic Charge relay system. Residues 148 to 167 (YREKRKQNPHSENEDSDWLI) form a disordered region. The active-site Charge relay system is Ser-171. The active-site Acyl-ester intermediate is Ser-195.

It belongs to the amidase family. GatA subfamily. In terms of assembly, subunit of the heterotrimeric GatCAB amidotransferase (AdT) complex, composed of A (QRSL1), B (GATB) and C (GATC) subunits.

Its subcellular location is the mitochondrion. The enzyme catalyses L-glutamyl-tRNA(Gln) + L-glutamine + ATP + H2O = L-glutaminyl-tRNA(Gln) + L-glutamate + ADP + phosphate + H(+). Its function is as follows. Allows the formation of correctly charged Gln-tRNA(Gln) through the transamidation of misacylated Glu-tRNA(Gln) in the mitochondria. The reaction takes place in the presence of glutamine and ATP through an activated gamma-phospho-Glu-tRNA(Gln). The protein is Glutamyl-tRNA(Gln) amidotransferase subunit A, mitochondrial of Homo sapiens (Human).